We begin with the raw amino-acid sequence, 171 residues long: Dual specificity protein phosphatase OPG106 (171 aa).

Positions 1–27 (MDKKSLYKYLLLRSTGDMHKAKSPTIM) are dimerization. One can recognise a Tyrosine-protein phosphatase domain in the interval 23–171 (SPTIMTRVTN…IIEKYVIDKN (149 aa)). Residue Cys110 is the Phosphocysteine intermediate of the active site.

It belongs to the protein-tyrosine phosphatase family. Non-receptor class dual specificity subfamily. Homodimer.

The protein resides in the virion. The protein localises to the host cytoplasm. The catalysed reaction is O-phospho-L-tyrosyl-[protein] + H2O = L-tyrosyl-[protein] + phosphate. It carries out the reaction O-phospho-L-seryl-[protein] + H2O = L-seryl-[protein] + phosphate. In terms of biological role, serine/tyrosine phosphatase which down-regulates cellular antiviral response by dephosphorylating activated host STAT1 and blocking interferon (IFN)-stimulated innate immune responses. Dephosphorylates the OPG144 protein. The protein is Dual specificity protein phosphatase OPG106 (OPG106) of Bos taurus (Bovine).